Reading from the N-terminus, the 343-residue chain is Ferrochelatase (343 aa).

The Fe cation site is built by His-191 and Glu-270.

Belongs to the ferrochelatase family.

It is found in the cytoplasm. The enzyme catalyses heme b + 2 H(+) = protoporphyrin IX + Fe(2+). It participates in porphyrin-containing compound metabolism; protoheme biosynthesis; protoheme from protoporphyrin-IX: step 1/1. Functionally, catalyzes the ferrous insertion into protoporphyrin IX. The chain is Ferrochelatase from Phenylobacterium zucineum (strain HLK1).